A 323-amino-acid chain; its full sequence is Homoserine kinase (323 aa).

97 to 107 (PHGRGMGSSGA) is a binding site for ATP.

Belongs to the GHMP kinase family. Homoserine kinase subfamily.

Its subcellular location is the cytoplasm. The enzyme catalyses L-homoserine + ATP = O-phospho-L-homoserine + ADP + H(+). Its pathway is amino-acid biosynthesis; L-threonine biosynthesis; L-threonine from L-aspartate: step 4/5. In terms of biological role, catalyzes the ATP-dependent phosphorylation of L-homoserine to L-homoserine phosphate. This is Homoserine kinase from Leifsonia xyli subsp. xyli (strain CTCB07).